The sequence spans 526 residues: Berberine bridge enzyme-like 11 (526 aa).

The N-terminal stretch at 1–21 (MEKLLIICMLLISVLVATSQS) is a signal peptide. A disulfide bridge connects residues Cys-31 and Cys-94. 4 N-linked (GlcNAc...) asparagine glycosylation sites follow: Asn-52, Asn-136, Asn-273, and Asn-482. The region spanning 72–247 (TTPKPIAIIT…MGYKIRLVPV (176 aa)) is the FAD-binding PCMH-type domain. The segment at residues 109–171 (HDFEGLSYTS…NVLGFPAGLC (63 aa)) is a cross-link (6-(S-cysteinyl)-8alpha-(pros-histidyl)-FAD (His-Cys)).

This sequence belongs to the oxygen-dependent FAD-linked oxidoreductase family. FAD is required as a cofactor. The FAD cofactor is bound via a bicovalent 6-S-cysteinyl, 8alpha-N1-histidyl FAD linkage.

Its subcellular location is the secreted. The protein resides in the cell wall. The sequence is that of Berberine bridge enzyme-like 11 from Arabidopsis thaliana (Mouse-ear cress).